A 200-amino-acid chain; its full sequence is Lipopolysaccharide core heptose(II)-phosphate phosphatase (200 aa).

Residues 1-25 (MLAFCRSSLKSKKYFIILLALAAIA) form the signal peptide.

It belongs to the phosphoglycerate mutase family. Ais subfamily.

It is found in the periplasm. It functions in the pathway bacterial outer membrane biogenesis; lipopolysaccharide metabolism. Functionally, catalyzes the dephosphorylation of heptose(II) of the outer membrane lipopolysaccharide core. In Escherichia coli (strain SE11), this protein is Lipopolysaccharide core heptose(II)-phosphate phosphatase.